The primary structure comprises 305 residues: Large ribosomal subunit protein uL10 (305 aa).

Belongs to the universal ribosomal protein uL10 family. In terms of assembly, P0 forms a pentameric complex by interaction with dimers of P1 and P2. Post-translationally, phosphorylated.

Ribosomal protein P0 is the functional equivalent of E.coli protein L10. The chain is Large ribosomal subunit protein uL10 (rplp0) from Dictyostelium discoideum (Social amoeba).